The sequence spans 301 residues: Enolase-phosphatase E1 (301 aa).

Positions 22 and 24 each coordinate Mg(2+). Substrate contacts are provided by residues 163–164 (SS) and Lys197. Mg(2+) is bound at residue Asp222. The disordered stretch occupies residues 273–301 (AQAGDTEAKRSASGDGALAAKKAPPTHDF).

The protein belongs to the HAD-like hydrolase superfamily. MasA/MtnC family. As to quaternary structure, monomer. Requires Mg(2+) as cofactor.

The protein localises to the cytoplasm. Its subcellular location is the nucleus. It catalyses the reaction 5-methylsulfanyl-2,3-dioxopentyl phosphate + H2O = 1,2-dihydroxy-5-(methylsulfanyl)pent-1-en-3-one + phosphate. The protein operates within amino-acid biosynthesis; L-methionine biosynthesis via salvage pathway; L-methionine from S-methyl-5-thio-alpha-D-ribose 1-phosphate: step 3/6. It participates in amino-acid biosynthesis; L-methionine biosynthesis via salvage pathway; L-methionine from S-methyl-5-thio-alpha-D-ribose 1-phosphate: step 4/6. Bifunctional enzyme that catalyzes the enolization of 2,3-diketo-5-methylthiopentyl-1-phosphate (DK-MTP-1-P) into the intermediate 2-hydroxy-3-keto-5-methylthiopentenyl-1-phosphate (HK-MTPenyl-1-P), which is then dephosphorylated to form the acireductone 1,2-dihydroxy-3-keto-5-methylthiopentene (DHK-MTPene). The sequence is that of Enolase-phosphatase E1 from Monosiga brevicollis (Choanoflagellate).